A 270-amino-acid polypeptide reads, in one-letter code: 4-hydroxy-tetrahydrodipicolinate reductase (270 aa).

Residues 11–16 and Glu-37 each bind NAD(+); that span reads GCQGRM. Arg-38 serves as a coordination point for NADP(+). NAD(+) is bound by residues 101 to 103 and 125 to 128; these read GTT and ASNF. Residue His-158 is the Proton donor/acceptor of the active site. Residue His-159 coordinates (S)-2,3,4,5-tetrahydrodipicolinate. Lys-162 serves as the catalytic Proton donor. Residue 168–169 participates in (S)-2,3,4,5-tetrahydrodipicolinate binding; that stretch reads GT.

The protein belongs to the DapB family.

Its subcellular location is the cytoplasm. It catalyses the reaction (S)-2,3,4,5-tetrahydrodipicolinate + NAD(+) + H2O = (2S,4S)-4-hydroxy-2,3,4,5-tetrahydrodipicolinate + NADH + H(+). The enzyme catalyses (S)-2,3,4,5-tetrahydrodipicolinate + NADP(+) + H2O = (2S,4S)-4-hydroxy-2,3,4,5-tetrahydrodipicolinate + NADPH + H(+). Its pathway is amino-acid biosynthesis; L-lysine biosynthesis via DAP pathway; (S)-tetrahydrodipicolinate from L-aspartate: step 4/4. Its function is as follows. Catalyzes the conversion of 4-hydroxy-tetrahydrodipicolinate (HTPA) to tetrahydrodipicolinate. The polypeptide is 4-hydroxy-tetrahydrodipicolinate reductase (Tolumonas auensis (strain DSM 9187 / NBRC 110442 / TA 4)).